The primary structure comprises 350 residues: N(4)-bis(aminopropyl)spermidine synthase (350 aa).

This sequence belongs to the branched-chain polyamine synthase family.

The protein localises to the cytoplasm. The catalysed reaction is 2 S-adenosyl 3-(methylsulfanyl)propylamine + spermidine = N(4)-bis(aminopropyl)spermidine + 2 S-methyl-5'-thioadenosine + 2 H(+). It participates in amine and polyamine biosynthesis. Involved in the biosynthesis of branched-chain polyamines, which support the growth of thermophiles under high-temperature conditions. Catalyzes the sequential condensation of spermidine with the aminopropyl groups of decarboxylated S-adenosylmethionines to produce N(4)-bis(aminopropyl)spermidine via N(4)-aminopropylspermidine. In Methanocaldococcus jannaschii (strain ATCC 43067 / DSM 2661 / JAL-1 / JCM 10045 / NBRC 100440) (Methanococcus jannaschii), this protein is N(4)-bis(aminopropyl)spermidine synthase.